We begin with the raw amino-acid sequence, 446 residues long: Glutamyl-tRNA reductase (446 aa).

Substrate-binding positions include 49-52 (TCNR), S109, 114-116 (ETQ), and Q120. C50 acts as the Nucleophile in catalysis. 189–194 (GAGEMA) contributes to the NADP(+) binding site.

Belongs to the glutamyl-tRNA reductase family. Homodimer.

It catalyses the reaction (S)-4-amino-5-oxopentanoate + tRNA(Glu) + NADP(+) = L-glutamyl-tRNA(Glu) + NADPH + H(+). It participates in porphyrin-containing compound metabolism; protoporphyrin-IX biosynthesis; 5-aminolevulinate from L-glutamyl-tRNA(Glu): step 1/2. Catalyzes the NADPH-dependent reduction of glutamyl-tRNA(Glu) to glutamate 1-semialdehyde (GSA). This Macrococcus caseolyticus (strain JCSC5402) (Macrococcoides caseolyticum) protein is Glutamyl-tRNA reductase.